The sequence spans 72 residues: Translation initiation factor IF-1 (72 aa).

The S1-like domain maps to 1 to 72 (MAKEEAIEVE…TRGRIIFRER (72 aa)).

Belongs to the IF-1 family. In terms of assembly, component of the 30S ribosomal translation pre-initiation complex which assembles on the 30S ribosome in the order IF-2 and IF-3, IF-1 and N-formylmethionyl-tRNA(fMet); mRNA recruitment can occur at any time during PIC assembly.

Its subcellular location is the cytoplasm. Its function is as follows. One of the essential components for the initiation of protein synthesis. Stabilizes the binding of IF-2 and IF-3 on the 30S subunit to which N-formylmethionyl-tRNA(fMet) subsequently binds. Helps modulate mRNA selection, yielding the 30S pre-initiation complex (PIC). Upon addition of the 50S ribosomal subunit IF-1, IF-2 and IF-3 are released leaving the mature 70S translation initiation complex. The protein is Translation initiation factor IF-1 of Treponema denticola (strain ATCC 35405 / DSM 14222 / CIP 103919 / JCM 8153 / KCTC 15104).